The primary structure comprises 328 residues: Putative HTH-type transcriptional regulatory protein MA_3524 (328 aa).

The region spanning 132-190 is the HTH cro/C1-type domain; that stretch reads LKKARTDQSMSLGTLASMVGVSRRTISKYEEEGMDASIDVVLQLEDIFGVELARPIDIL. Positions 143–162 form a DNA-binding region, H-T-H motif; the sequence is LGTLASMVGVSRRTISKYEE.

This chain is Putative HTH-type transcriptional regulatory protein MA_3524, found in Methanosarcina acetivorans (strain ATCC 35395 / DSM 2834 / JCM 12185 / C2A).